The chain runs to 361 residues: Glutamate 5-kinase (361 aa).

Residue K14 participates in ATP binding. Residues S54, D141, and N153 each contribute to the substrate site. One can recognise a PUA domain in the interval 277–355; the sequence is KGAVIINQGA…KGLKPVIHYD (79 aa).

This sequence belongs to the glutamate 5-kinase family.

The protein localises to the cytoplasm. It catalyses the reaction L-glutamate + ATP = L-glutamyl 5-phosphate + ADP. It participates in amino-acid biosynthesis; L-proline biosynthesis; L-glutamate 5-semialdehyde from L-glutamate: step 1/2. Its function is as follows. Catalyzes the transfer of a phosphate group to glutamate to form L-glutamate 5-phosphate. In Chlorobaculum tepidum (strain ATCC 49652 / DSM 12025 / NBRC 103806 / TLS) (Chlorobium tepidum), this protein is Glutamate 5-kinase.